A 299-amino-acid chain; its full sequence is Acetaldehyde dehydrogenase 6 (299 aa).

The active-site Acyl-thioester intermediate is the Cys125. Residues 156-164 (GAGPGTRAN) and Asn275 contribute to the NAD(+) site.

Belongs to the acetaldehyde dehydrogenase family.

The enzyme catalyses acetaldehyde + NAD(+) + CoA = acetyl-CoA + NADH + H(+). This chain is Acetaldehyde dehydrogenase 6 (hpdG), found in Rhodococcus jostii (strain RHA1).